The sequence spans 591 residues: Protein enabled homolog (591 aa).

The WH1 domain maps to 1-111 (MSEQSICQAR…SAMMHALEVL (111 aa)). The span at 115–136 (ETGPTLPRQNSQLPAQVQNGPS) shows a compositional bias: polar residues. The interval 115 to 146 (ETGPTLPRQNSQLPAQVQNGPSQEELEIQRRQ) is disordered. S125 carries the post-translational modification Phosphoserine. Positions 135-265 (PSQEELEIQR…LEWERERRIS (131 aa)) form a coiled coil. 9 consecutive repeat copies span residues 156-160 (LERER), 161-165 (LERER), 166-170 (MERER), 171-175 (LERER), 176-180 (LERER), 181-185 (LERER), 186-190 (LEQEQ), 191-195 (LERER), and 196-200 (QERER). Residues 156–200 (LERERLERERMERERLERERLERERLERERLEQEQLERERQERER) are 9 X 5 AA tandem repeats of [LMQ]-E-[QR]-E-[QR]. Residues 221 to 264 (RLDRERQERQERERLERLERERQERERQEQLEREQLEWERERRI) are compositionally biased toward basic and acidic residues. The interval 221–379 (RLDRERQERQ…PPLPASGFFL (159 aa)) is disordered. S265 bears the Phosphoserine; by PKA mark. Over residues 275–305 (TPLNSVLGDSSASEPGLQAASQPAETPSQQG) the composition is skewed to polar residues. 2 stretches are compositionally biased toward pro residues: residues 311–323 (LAPPPPPPLPPGP) and 330–373 (LPPP…PPLP). The segment at 391–411 (GLAAAIAGAKLRKVSRMEDTS) is EVH2 block A. Residues 391-588 (GLAAAIAGAK…DAIRQELSKS (198 aa)) form an EVH2 region. The KLKR signature appears at 400–403 (KLRK). Positions 405 to 549 (SRMEDTSFPS…LSQPSANGVQ (145 aa)) are disordered. A compositionally biased stretch (gly residues) spans 432-443 (RGNGPLPLGGSG). Residues 442-459 (SGLMEEMSALLARRRRIA) are EVH2 block B. A Phosphothreonine modification is found at I465. Residues E471 and E475 each carry the phosphoserine modification. Composition is skewed to polar residues over residues 479–491 (PVTSKASSTSTPE) and 499–509 (RTNTMNGSKSP). T502 is subject to Phosphothreonine. A phosphoserine mark is found at S506, S508, and S512. Over residues 538 to 549 (TPLSQPSANGVQ) the composition is skewed to polar residues. The EVH2 block C stretch occupies residues 554 to 588 (DYDRLKQDILDEMRKELTKLKEELIDAIRQELSKS). Residues 557–587 (RLKQDILDEMRKELTKLKEELIDAIRQELSK) are a coiled coil.

The protein belongs to the Ena/VASP family. As to quaternary structure, homotetramer. Interacts with APBB1IP, APBB1, PFN1 and ROBO4. Isoforms, containing the polyproline-rich regions with PPLP motifs, bind the WW domain of APBB1IP. Isoforms, containing the PPSY motif, bind, in vitro, to the WW2 and WW3 domains of NEDD4 and to the WW1 domain of YAP1. Binds the SH3 domain of BAIAP2-alpha but only after the autoinhibitory region of BAIAP2-alpha has been blocked by interaction with CDC42. Interacts, via the EVH1/WH1 domain, with the Pro-rich domains from VCL, ZYX and Listeria monocytogenes actA and with TES (via LIM domains). The TES LIM domain and the Pro-rich domains from VCL or ZYX compete for the same binding site. Interaction with ZYX is important for targeting ENAH to focal adhesions and enhances production of actin-rich structures at the apical surface of cells. Interacts, through the Pro-rich region, with the C-terminal SH3 domain of DNMPB. Binds GPHN. Interacts with FAT1 (via EVH1 domains). Heterotrimer with TES and ACTL7A. Interacts with PRPF40A. Post-translationally, NTN1-induced PKA phosphorylation on Ser-265 directly parallels the formation of filopodial protrusions. In terms of tissue distribution, expressed in myoepithelia of parotid, breast, bronchial glands and sweat glands. Expressed in colon-rectum muscolaris mucosae epithelium, pancreas acinar ductal epithelium, endometrium epithelium, prostate fibromuscolar stroma and placenta vascular media. Overexpressed in a majority of breast cancer cell lines and primary breast tumor lesions.

It is found in the cytoplasm. Its subcellular location is the cytoskeleton. The protein localises to the cell projection. It localises to the lamellipodium. The protein resides in the filopodium. It is found in the synapse. Its subcellular location is the cell junction. The protein localises to the focal adhesion. Ena/VASP proteins are actin-associated proteins involved in a range of processes dependent on cytoskeleton remodeling and cell polarity such as axon guidance and lamellipodial and filopodial dynamics in migrating cells. ENAH induces the formation of F-actin rich outgrowths in fibroblasts. Acts synergistically with BAIAP2-alpha and downstream of NTN1 to promote filipodia formation. In Homo sapiens (Human), this protein is Protein enabled homolog (ENAH).